We begin with the raw amino-acid sequence, 65 residues long: MSTTQTNQTPIKKYYSINELTALGIGSRTKIDRLAKQGLLKKIKIGGSVRFSADEVNAFIQSTNA.

This is an uncharacterized protein from Pasteurella multocida (strain Pm70).